We begin with the raw amino-acid sequence, 219 residues long: 2-hydroxy-3-keto-5-methylthiopentenyl-1-phosphate phosphatase (219 aa).

Belongs to the HAD-like hydrolase superfamily. MtnX family.

It catalyses the reaction 2-hydroxy-5-methylsulfanyl-3-oxopent-1-enyl phosphate + H2O = 1,2-dihydroxy-5-(methylsulfanyl)pent-1-en-3-one + phosphate. Its pathway is amino-acid biosynthesis; L-methionine biosynthesis via salvage pathway; L-methionine from S-methyl-5-thio-alpha-D-ribose 1-phosphate: step 4/6. Its function is as follows. Dephosphorylates 2-hydroxy-3-keto-5-methylthiopentenyl-1-phosphate (HK-MTPenyl-1-P) yielding 1,2-dihydroxy-3-keto-5-methylthiopentene (DHK-MTPene). The sequence is that of 2-hydroxy-3-keto-5-methylthiopentenyl-1-phosphate phosphatase from Bacillus anthracis (strain A0248).